A 47-amino-acid chain; its full sequence is Gas vesicle protein A (47 aa).

This sequence belongs to the gas vesicle GvpA family. As to quaternary structure, the gas vesicle shell is 2 nm thick and consists of a single layer of this protein. It forms helical ribs nearly perpendicular to the long axis of the vesicle.

The protein localises to the gas vesicle shell. Functionally, gas vesicles are hollow, gas filled proteinaceous nanostructures found in some microorganisms. During planktonic growth they allow positioning of the organism at a favorable depth for light or nutrient acquisition. GvpA forms the protein shell. This is Gas vesicle protein A from Dactylococcopsis salina (Myxobaktron salinum).